We begin with the raw amino-acid sequence, 472 residues long: Ribosomal protein uS12 methylthiotransferase RimO (472 aa).

Positions 33-143 (NRIGFVSLGC…VLKHVHKYVP (111 aa)) constitute an MTTase N-terminal domain. Residues Cys-42, Cys-78, Cys-107, Cys-175, Cys-179, and Cys-182 each coordinate [4Fe-4S] cluster. Residues 161 to 398 (LTPKHYAYLK…MELQAEISAE (238 aa)) enclose the Radical SAM core domain. The region spanning 401–467 (ARFVGRTLDI…EHDLWAEVVD (67 aa)) is the TRAM domain.

This sequence belongs to the methylthiotransferase family. RimO subfamily. It depends on [4Fe-4S] cluster as a cofactor.

It localises to the cytoplasm. It catalyses the reaction L-aspartate(89)-[ribosomal protein uS12]-hydrogen + (sulfur carrier)-SH + AH2 + 2 S-adenosyl-L-methionine = 3-methylsulfanyl-L-aspartate(89)-[ribosomal protein uS12]-hydrogen + (sulfur carrier)-H + 5'-deoxyadenosine + L-methionine + A + S-adenosyl-L-homocysteine + 2 H(+). Functionally, catalyzes the methylthiolation of an aspartic acid residue of ribosomal protein uS12. The chain is Ribosomal protein uS12 methylthiotransferase RimO from Shewanella sp. (strain W3-18-1).